The sequence spans 433 residues: Monodehydroascorbate reductase (433 aa).

FAD contacts are provided by residues 13–16 (GGVS), E40, R47, K52, I95, and 146–147 (RE). Residues 171-177 (GGYIGLE), E195, R201, and G260 contribute to the NAD(+) site. Residue 173–177 (YIGLE) coordinates NADP(+). Residues R201 and G260 each coordinate NADP(+). D297 lines the FAD pocket. 313–314 (EH) serves as a coordination point for NAD(+). 313-314 (EH) contributes to the NADP(+) binding site. Position 315 (V315) interacts with FAD. R319 provides a ligand contact to L-ascorbate. Y348 serves as a coordination point for FAD. NAD(+) is bound at residue Y348. Y348 contacts NADP(+). R350 is an L-ascorbate binding site.

This sequence belongs to the FAD-dependent oxidoreductase family. It depends on FAD as a cofactor. As to expression, expressed in leaves, and to a lesser degree in stems, roots and all stages of fruit.

Its subcellular location is the cytoplasm. The enzyme catalyses 2 monodehydro-L-ascorbate radical + NADH + H(+) = 2 L-ascorbate + NAD(+). Catalyzes the conversion of monodehydroascorbate to ascorbate, oxidizing NADH in the process. The sequence is that of Monodehydroascorbate reductase from Solanum lycopersicum (Tomato).